Reading from the N-terminus, the 353-residue chain is Phosphate acyltransferase (353 aa).

Belongs to the PlsX family. As to quaternary structure, homodimer. Probably interacts with PlsY.

It is found in the cytoplasm. The catalysed reaction is a fatty acyl-[ACP] + phosphate = an acyl phosphate + holo-[ACP]. It participates in lipid metabolism; phospholipid metabolism. In terms of biological role, catalyzes the reversible formation of acyl-phosphate (acyl-PO(4)) from acyl-[acyl-carrier-protein] (acyl-ACP). This enzyme utilizes acyl-ACP as fatty acyl donor, but not acyl-CoA. The sequence is that of Phosphate acyltransferase from Syntrophobacter fumaroxidans (strain DSM 10017 / MPOB).